Here is an 824-residue protein sequence, read N- to C-terminus: Glycogen phosphorylase (824 aa).

Lysine 667 bears the N6-(pyridoxal phosphate)lysine mark.

This sequence belongs to the glycogen phosphorylase family. Requires pyridoxal 5'-phosphate as cofactor.

It carries out the reaction [(1-&gt;4)-alpha-D-glucosyl](n) + phosphate = [(1-&gt;4)-alpha-D-glucosyl](n-1) + alpha-D-glucose 1-phosphate. Functionally, phosphorylase is an important allosteric enzyme in carbohydrate metabolism. Enzymes from different sources differ in their regulatory mechanisms and in their natural substrates. However, all known phosphorylases share catalytic and structural properties. This chain is Glycogen phosphorylase (glgP), found in Chlamydia pneumoniae (Chlamydophila pneumoniae).